Consider the following 252-residue polypeptide: Chitooligosaccharide deacetylase (252 aa).

Mg(2+)-binding residues include histidine 61 and histidine 125.

The protein belongs to the YdjC deacetylase family. ChbG subfamily. In terms of assembly, homodimer. The cofactor is Mg(2+).

The protein resides in the cytoplasm. The enzyme catalyses N,N'-diacetylchitobiose + H2O = N-acetyl-beta-D-glucosaminyl-(1-&gt;4)-D-glucosamine + acetate. It catalyses the reaction diacetylchitobiose-6'-phosphate + H2O = N'-monoacetylchitobiose-6'-phosphate + acetate. The protein operates within glycan degradation; chitin degradation. Functionally, involved in the degradation of chitin. ChbG is essential for growth on the acetylated chitooligosaccharides chitobiose and chitotriose but is dispensable for growth on cellobiose and chitosan dimer, the deacetylated form of chitobiose. Deacetylation of chitobiose-6-P and chitotriose-6-P is necessary for both the activation of the chb promoter by the regulatory protein ChbR and the hydrolysis of phosphorylated beta-glucosides by the phospho-beta-glucosidase ChbF. Catalyzes the removal of only one acetyl group from chitobiose-6-P to yield monoacetylchitobiose-6-P, the inducer of ChbR and the substrate of ChbF. The polypeptide is Chitooligosaccharide deacetylase (Salmonella paratyphi C (strain RKS4594)).